The following is a 133-amino-acid chain: Bacteriohemerythrin (133 aa).

Residues His-19, His-56, Glu-60, His-75, His-79, His-115, and Asp-120 each coordinate Fe cation.

This sequence belongs to the hemerythrin family. As to quaternary structure, monomer.

Its function is as follows. Oxygen-binding protein. May be involved in a storage mechanism or for delivery to oxygen-requiring enzymes. The oxygen-binding site contains two iron atoms. The protein is Bacteriohemerythrin of Campylobacter jejuni subsp. jejuni serotype O:6 (strain 81116 / NCTC 11828).